Reading from the N-terminus, the 460-residue chain is MATGKIVQVIGAVVDVEFPQDAVPRVYDALEVQNGNESLVLEVQQQLGGGIVRTIAMGSSDGLRRGLAVKDLEHPIEVPVGKATLGRIMNVLGQPIDMKGDIGEEDRWAIHRAAPSYEELSSSQELLETGIKVIDLMCPFAKGGKVGLFGGAGVGKTVNMMELIRNIAIEHSGYSVFAGVGERTREGNDFYHEMTDSNVLDKVSLVYGQMNEPPGNRLRVALTGLTMAEKFRDEGRDVLLFVDNIYRYTLAGTEVSALLGRMPSAVGYQPTLAEEMGVLQERITSTKTGSITSVQAVYVPADDLTDPSPATTFAHLDATVVLSRQIASLGIYPAVDPLDSTSRQLDPLVVGQEHYDTARGVQSLLQRYQELKDIIAILGMDELSEEDKLVVARARKIQRFLSQPFFVAEVFTGSPGKYVSLKDTIRGFKGIMEGEYDHLPEQAFYMVGSIDEAVEKAKKL.

An ATP-binding site is contributed by 150-157; sequence GGAGVGKT.

It belongs to the ATPase alpha/beta chains family. F-type ATPases have 2 components, CF(1) - the catalytic core - and CF(0) - the membrane proton channel. CF(1) has five subunits: alpha(3), beta(3), gamma(1), delta(1), epsilon(1). CF(0) has three main subunits: a(1), b(2) and c(9-12). The alpha and beta chains form an alternating ring which encloses part of the gamma chain. CF(1) is attached to CF(0) by a central stalk formed by the gamma and epsilon chains, while a peripheral stalk is formed by the delta and b chains.

The protein localises to the cell inner membrane. The enzyme catalyses ATP + H2O + 4 H(+)(in) = ADP + phosphate + 5 H(+)(out). Functionally, produces ATP from ADP in the presence of a proton gradient across the membrane. The catalytic sites are hosted primarily by the beta subunits. The polypeptide is ATP synthase subunit beta (Enterobacter sp. (strain 638)).